Here is an 83-residue protein sequence, read N- to C-terminus: Exodeoxyribonuclease 7 small subunit (83 aa).

Belongs to the XseB family. In terms of assembly, heterooligomer composed of large and small subunits.

The protein resides in the cytoplasm. The catalysed reaction is Exonucleolytic cleavage in either 5'- to 3'- or 3'- to 5'-direction to yield nucleoside 5'-phosphates.. Functionally, bidirectionally degrades single-stranded DNA into large acid-insoluble oligonucleotides, which are then degraded further into small acid-soluble oligonucleotides. The sequence is that of Exodeoxyribonuclease 7 small subunit from Sinorhizobium medicae (strain WSM419) (Ensifer medicae).